A 936-amino-acid chain; its full sequence is ABC transporter A family member 5 (936 aa).

7 helical membrane passes run leucine 34–threonine 54, alanine 340–leucine 360, phenylalanine 393–leucine 413, serine 422–valine 442, valine 454–leucine 474, tryptophan 484–tyrosine 501, and alanine 527–tyrosine 547. The ABC transporter domain occupies isoleucine 614 to threonine 851. Glycine 652–threonine 659 contacts ATP.

It belongs to the ABC transporter superfamily. ABCA family. CPR flippase (TC 3.A.1.211) subfamily.

It localises to the membrane. The sequence is that of ABC transporter A family member 5 (ABCA5) from Arabidopsis thaliana (Mouse-ear cress).